The primary structure comprises 530 residues: Negative elongation factor A (530 aa).

The HDAg domain occupies Trp-89–Leu-248. The tract at residues Arg-125–Gln-188 is NELF-C/D-binding. At Thr-157 the chain carries Phosphothreonine. An RNAPII-binding region spans residues Leu-189–Leu-248. Disordered stretches follow at residues Pro-213 to Leu-248, Gly-266 to Ala-296, and Ser-312 to Thr-409. Phosphoserine occurs at positions 225 and 233. Polar residues predominate over residues Ser-225–Arg-238. At Thr-277 the chain carries Phosphothreonine. Basic and acidic residues predominate over residues Thr-277–Thr-291. The span at Ser-315 to Ser-341 shows a compositional bias: low complexity. Ser-363 bears the Phosphoserine mark.

This sequence belongs to the NELF-A family. In terms of assembly, the NELF complex is composed of NELFA, NELFB, NELFCD and NELFE; NELFA and NELFCD form a stable subcomplex that binds to the N-terminus of NELFB. In vitro, the NELFA:NELFCD subcomplex binds to ssDNA and ssRNA in a sequence- and structure-dependent manner. Interacts with the RNA polymerase II complex when it is not phosphorylated by P-TEFb. Interacts with NELFB. As to expression, ubiquitous. Expressed in brain, heart, spleen, lung, liver, muscle, kidney and testis. Already expressed in 7 dpc embryos.

It is found in the nucleus. In terms of biological role, essential component of the NELF complex, a complex that negatively regulates the elongation of transcription by RNA polymerase II. The NELF complex, which acts via an association with the DSIF complex and causes transcriptional pausing, is counteracted by the P-TEFb kinase complex. This Mus musculus (Mouse) protein is Negative elongation factor A (Nelfa).